The sequence spans 115 residues: Nitrogen regulatory protein P-II 1 (115 aa).

Y54 is modified (O-UMP-tyrosine).

It belongs to the P(II) protein family.

Functionally, could be involved in the regulation of nitrogen fixation. The protein is Nitrogen regulatory protein P-II 1 of Methanothermobacter thermautotrophicus (strain ATCC 29096 / DSM 1053 / JCM 10044 / NBRC 100330 / Delta H) (Methanobacterium thermoautotrophicum).